A 238-amino-acid polypeptide reads, in one-letter code: Endonuclease V (238 aa).

Positions 46 and 116 each coordinate Mg(2+).

Belongs to the endonuclease V family. The cofactor is Mg(2+).

The protein localises to the cytoplasm. The catalysed reaction is Endonucleolytic cleavage at apurinic or apyrimidinic sites to products with a 5'-phosphate.. DNA repair enzyme involved in the repair of deaminated bases. Selectively cleaves double-stranded DNA at the second phosphodiester bond 3' to a deoxyinosine leaving behind the intact lesion on the nicked DNA. This is Endonuclease V from Bacillus velezensis (strain DSM 23117 / BGSC 10A6 / LMG 26770 / FZB42) (Bacillus amyloliquefaciens subsp. plantarum).